The following is a 143-amino-acid chain: Large ribosomal subunit protein uL13 (143 aa).

It belongs to the universal ribosomal protein uL13 family. As to quaternary structure, part of the 50S ribosomal subunit.

Functionally, this protein is one of the early assembly proteins of the 50S ribosomal subunit, although it is not seen to bind rRNA by itself. It is important during the early stages of 50S assembly. The protein is Large ribosomal subunit protein uL13 of Solibacter usitatus (strain Ellin6076).